We begin with the raw amino-acid sequence, 172 residues long: RNA pyrophosphohydrolase (172 aa).

Residues 8–153 enclose the Nudix hydrolase domain; sequence QHRPNVGVVL…KRGVYEAVVA (146 aa). The Nudix box signature appears at 43-64; it reads GGVDEGEDLEVAARRELAEETG.

This sequence belongs to the Nudix hydrolase family. RppH subfamily. It depends on a divalent metal cation as a cofactor.

In terms of biological role, accelerates the degradation of transcripts by removing pyrophosphate from the 5'-end of triphosphorylated RNA, leading to a more labile monophosphorylated state that can stimulate subsequent ribonuclease cleavage. This Caulobacter vibrioides (strain ATCC 19089 / CIP 103742 / CB 15) (Caulobacter crescentus) protein is RNA pyrophosphohydrolase.